The following is a 354-amino-acid chain: Uroporphyrinogen decarboxylase (354 aa).

Substrate-binding positions include 27–31 (RQAGR), Asp-77, Tyr-154, Thr-209, and His-327.

The protein belongs to the uroporphyrinogen decarboxylase family. In terms of assembly, homodimer.

It is found in the cytoplasm. The catalysed reaction is uroporphyrinogen III + 4 H(+) = coproporphyrinogen III + 4 CO2. It participates in porphyrin-containing compound metabolism; protoporphyrin-IX biosynthesis; coproporphyrinogen-III from 5-aminolevulinate: step 4/4. Functionally, catalyzes the decarboxylation of four acetate groups of uroporphyrinogen-III to yield coproporphyrinogen-III. This is Uroporphyrinogen decarboxylase from Enterobacter sp. (strain 638).